Consider the following 403-residue polypeptide: Acetate kinase (403 aa).

Asn-7 serves as a coordination point for Mg(2+). Residue Lys-14 coordinates ATP. Arg-97 contacts substrate. Asp-154 functions as the Proton donor/acceptor in the catalytic mechanism. Residues 213-217 (HLGNG), 287-289 (DMR), and 335-339 (GIGEN) each bind ATP. A Mg(2+)-binding site is contributed by Glu-388.

This sequence belongs to the acetokinase family. In terms of assembly, homodimer. Requires Mg(2+) as cofactor. Mn(2+) is required as a cofactor.

The protein resides in the cytoplasm. The enzyme catalyses acetate + ATP = acetyl phosphate + ADP. The protein operates within metabolic intermediate biosynthesis; acetyl-CoA biosynthesis; acetyl-CoA from acetate: step 1/2. In terms of biological role, catalyzes the formation of acetyl phosphate from acetate and ATP. Can also catalyze the reverse reaction. The protein is Acetate kinase of Synechococcus sp. (strain JA-2-3B'a(2-13)) (Cyanobacteria bacterium Yellowstone B-Prime).